The chain runs to 372 residues: N-methyl-L-tryptophan oxidase (372 aa).

Residue 4-34 participates in FAD binding; it reads DLIIIGSGSVGAAAGYYATRAGLKVLMTDAH. An S-8alpha-FAD cysteine modification is found at cysteine 307.

This sequence belongs to the MSOX/MTOX family. MTOX subfamily. As to quaternary structure, monomer. FAD is required as a cofactor.

The catalysed reaction is N(alpha)-methyl-L-tryptophan + O2 + H2O = L-tryptophan + formaldehyde + H2O2. In terms of biological role, catalyzes the oxidative demethylation of N-methyl-L-tryptophan. In Salmonella heidelberg (strain SL476), this protein is N-methyl-L-tryptophan oxidase.